A 140-amino-acid chain; its full sequence is MLMPKRTKYRRPHRVSFEGKAKGKNVIVNGNYALVAKEGAFITNKQIEACRIAMNRYMKRTGKVWINIFPHLSLTKKPLEVRMGSGKGSPEEWVAVVKTGKVLFEVKDTSNSEKVEMEALRLASHKLPIKTKIVKKGVQV.

This sequence belongs to the universal ribosomal protein uL16 family. In terms of assembly, part of the 50S ribosomal subunit.

Its function is as follows. Binds 23S rRNA and is also seen to make contacts with the A and possibly P site tRNAs. The sequence is that of Large ribosomal subunit protein uL16 from Phytoplasma australiense.